The following is a 632-amino-acid chain: DNA topoisomerase 4 subunit B (632 aa).

ATP-binding positions include Tyr-5, Asn-42, Asp-69, Gly-110 to Ile-116, and Lys-334. The 114-residue stretch at Thr-412–Pro-525 folds into the Toprim domain. Positions 418, 490, and 492 each coordinate Mg(2+).

The protein belongs to the type II topoisomerase family. ParE type 1 subfamily. As to quaternary structure, heterotetramer composed of ParC and ParE. Mg(2+) is required as a cofactor. Requires Mn(2+) as cofactor. Ca(2+) serves as cofactor.

It catalyses the reaction ATP-dependent breakage, passage and rejoining of double-stranded DNA.. Functionally, topoisomerase IV is essential for chromosome segregation. It relaxes supercoiled DNA. Performs the decatenation events required during the replication of a circular DNA molecule. The protein is DNA topoisomerase 4 subunit B of Haemophilus influenzae (strain ATCC 51907 / DSM 11121 / KW20 / Rd).